Here is a 257-residue protein sequence, read N- to C-terminus: Homeobox protein goosecoid (257 aa).

Residues 160 to 219 (KRRHRTIFTDEQLEALENLFQETKYPDVGTREQLARKVHLREEKVEVWFKNRRAKWRRQK) constitute a DNA-binding region (homeobox). The disordered stretch occupies residues 213-257 (AKWRRQKRSSSEESENAEKWNKTSSSKASPEKREEEGKSDLDSDS). The segment covering 241–257 (SPEKREEEGKSDLDSDS) has biased composition (basic and acidic residues).

Belongs to the paired homeobox family. Bicoid subfamily.

It is found in the nucleus. Functionally, regulates chordin (CHRD). May play a role in spatial programing within discrete embryonic fields or lineage compartments during organogenesis. In concert with NKX3-2, plays a role in defining the structural components of the middle ear; required for the development of the entire tympanic ring. Probably involved in the regulatory networks that define neural crest cell fate specification and determine mesoderm cell lineages in mammals. The chain is Homeobox protein goosecoid (GSC) from Saguinus labiatus (Red-chested mustached tamarin).